The primary structure comprises 150 residues: MKLPSDIELFELVDKLSLTYFNKHFIDKVYFNTRLRTTGGRYLPSKRVIELNPKYVLESNKEEFYGIIKHELCHYHLHIEGKGYKHGDRDFKELLKATGSPRHCSPLPSQQREYRYKYQCIQCGFVYKRVRKVNMRKYRCGKCRGSLKEI.

In terms of domain architecture, SprT-like spans 11–149 (ELVDKLSLTY…CGKCRGSLKE (139 aa)). His-70 contributes to the Zn(2+) binding site. Glu-71 is an active-site residue. A Zn(2+)-binding site is contributed by His-74.

The protein belongs to the SprT family. The cofactor is Zn(2+).

The protein resides in the cytoplasm. The polypeptide is Protein SprT-like (Oceanobacillus iheyensis (strain DSM 14371 / CIP 107618 / JCM 11309 / KCTC 3954 / HTE831)).